Consider the following 309-residue polypeptide: Large ribosomal subunit protein mL45 (309 aa).

The protein belongs to the mitochondrion-specific ribosomal protein mL45 family. Component of the mitochondrial ribosome large subunit (39S) which comprises a 16S rRNA and about 50 distinct proteins.

The protein resides in the mitochondrion. Its function is as follows. Component of the mitochondrial large ribosomal subunit (mt-LSU). Within the mitochondrial ribosomes, required to direct the nascent polypeptide toward the tunnel exit and position the exit at a distance from the membrane surface. The chain is Large ribosomal subunit protein mL45 (mrpl45) from Xenopus laevis (African clawed frog).